The sequence spans 94 residues: Co-chaperonin GroES (94 aa).

It belongs to the GroES chaperonin family. As to quaternary structure, heptamer of 7 subunits arranged in a ring. Interacts with the chaperonin GroEL.

The protein localises to the cytoplasm. Its function is as follows. Together with the chaperonin GroEL, plays an essential role in assisting protein folding. The GroEL-GroES system forms a nano-cage that allows encapsulation of the non-native substrate proteins and provides a physical environment optimized to promote and accelerate protein folding. GroES binds to the apical surface of the GroEL ring, thereby capping the opening of the GroEL channel. This is Co-chaperonin GroES from Lactobacillus delbrueckii subsp. bulgaricus (strain ATCC BAA-365 / Lb-18).